We begin with the raw amino-acid sequence, 1486 residues long: Chromosome partition protein MukB (1486 aa).

34–41 is an ATP binding site; sequence GGNGAGKS. Coiled-coil stretches lie at residues 326–418, 444–480, and 509–603; these read LEAD…QYNQ, LETF…QAYQ, and RHLA…RAPV. A flexible hinge region spans residues 666–783; sequence PGGSEDQRLN…EVPLFGRAAR (118 aa). Coiled coils occupy residues 835-923, 977-1115, and 1209-1266; these read EAEI…AKLE, EMLS…TAKA, and VEAI…QNVS.

The protein belongs to the SMC family. MukB subfamily. In terms of assembly, homodimerization via its hinge domain. Binds to DNA via its C-terminal region. Interacts, and probably forms a ternary complex, with MukE and MukF via its C-terminal region. The complex formation is stimulated by calcium or magnesium. Interacts with tubulin-related protein FtsZ.

Its subcellular location is the cytoplasm. The protein resides in the nucleoid. Functionally, plays a central role in chromosome condensation, segregation and cell cycle progression. Functions as a homodimer, which is essential for chromosome partition. Involved in negative DNA supercoiling in vivo, and by this means organize and compact chromosomes. May achieve or facilitate chromosome segregation by condensation DNA from both sides of a centrally located replisome during cell division. The sequence is that of Chromosome partition protein MukB from Escherichia coli O157:H7.